The following is a 224-amino-acid chain: Superoxide dismutase [Mn], mitochondrial (224 aa).

A mitochondrion-targeting transit peptide spans 1-20 (MLLARAFARRSLRAGLWCRQ). Mn(2+) is bound by residues H46, H94, D177, and H181.

This sequence belongs to the iron/manganese superoxide dismutase family. In terms of assembly, homotetramer. Requires Mn(2+) as cofactor.

The protein resides in the mitochondrion matrix. The enzyme catalyses 2 superoxide + 2 H(+) = H2O2 + O2. In terms of biological role, destroys superoxide anion radicals which are normally produced within the cells and which are toxic to biological systems. This Charybdis feriata (Crucifix crab) protein is Superoxide dismutase [Mn], mitochondrial.